A 1108-amino-acid chain; its full sequence is Retinal guanylyl cyclase 1 (1108 aa).

The N-terminal stretch at 1 to 54 is a signal peptide; sequence MSAWLLPAGGFPGAGFCIPAWQSRSSLSRVLRWPGPGLPGLLLLLLLPSPSAFS. Residues 55–465 lie on the Extracellular side of the membrane; sequence AVFKVGVLGP…PDVICNGGVE (411 aa). Cys108 and Cys136 form a disulfide bridge. N-linked (GlcNAc...) asparagine glycosylation occurs at Asn300. The chain crosses the membrane as a helical span at residues 466–490; that stretch reads PGLVFVGFLLVIVVGLTGAFLAHYL. At 491-1108 the chain is on the cytoplasmic side; sequence RHRLLHMQMV…KARPGQFTGK (618 aa). A disordered region spans residues 520-552; the sequence is GGSSRKVAQGSRSSLATRSTSDIRSVPSQPQES. Residues 520-811 form the Protein kinase domain; it reads GGSSRKVAQG…DLTFDLFKGI (292 aa). Polar residues predominate over residues 529–552; the sequence is GSRSSLATRSTSDIRSVPSQPQES. The 131-residue stretch at 883-1013 folds into the Guanylate cyclase domain; that stretch reads TLYFSDIVGF…DTVNTASRME (131 aa). Positions 1069–1108 are disordered; sequence IPKPPDLQPGASNHGISLQEIPPERRKKLEKARPGQFTGK.

The protein belongs to the adenylyl cyclase class-4/guanylyl cyclase family. In terms of assembly, homodimer; requires homodimerization for guanylyl cyclase activity. Interacts (via C-terminus) with RD3 (via C-terminus); promotes the exit of GUCY2E from the endoplasmic reticulum and its trafficking to the photoreceptor outer segments. Interaction with RD3 negatively regulates GUCY2E guanylate cyclase activity. There are 9 conserved cysteine residues in sensory guanylate cyclases, 6 in the extracellular domain, which may be involved in intra- or interchain disulfide bonds. Expressed in retina and enriched in photoreceptor outer segments.

It localises to the membrane. The protein resides in the photoreceptor outer segment membrane. It is found in the endoplasmic reticulum membrane. The catalysed reaction is GTP = 3',5'-cyclic GMP + diphosphate. With respect to regulation, activated by GUCA1A when free calcium ions concentration is low, and inhibited by GUCA1A when free calcium ions concentration is high. Negatively regulated by RD3; inhibits the basal and GUCA1A-stimulated guanylate cyclase activity. Functionally, catalyzes the synthesis of cyclic GMP (cGMP) in rods and cones of photoreceptors. Plays an essential role in phototransduction, by mediating cGMP replenishment. May also participate in the trafficking of membrane-asociated proteins to the photoreceptor outer segment membrane. The protein is Retinal guanylyl cyclase 1 (Gucy2e) of Rattus norvegicus (Rat).